A 465-amino-acid chain; its full sequence is Serine/threonine-protein kinase 38 (465 aa).

A2 is modified (N-acetylalanine). Positions 62–87 (KRLRRSAHARKETEFLRLKRTRLGLE) are interaction with S100B. Phosphothreonine is present on T74. One can recognise a Protein kinase domain in the interval 89–382 (FESLKVIGRG…VEEIKNNLFF (294 aa)). Residues 95–103 (IGRGAFGEV) and K118 each bind ATP. Catalysis depends on D212, which acts as the Proton acceptor. S264 bears the Phosphoserine mark. At S281 the chain carries Phosphoserine; by autocatalysis. The UFM1-interacting motif (UFIM) motif lies at 306–311 (WSLGVI). Residues 383–455 (EGVDWEHIRE…KRFEGLTARG (73 aa)) enclose the AGC-kinase C-terminal domain. A Phosphothreonine; by STK24/MST3 modification is found at T444.

This sequence belongs to the protein kinase superfamily. AGC Ser/Thr protein kinase family. Homodimeric S100B binds two molecules of STK38. Interacts with MOB1 and MOB2. Interacts with MAP3K1 and MAP3K2 (via the kinase catalytic domain). Forms a tripartite complex with MOBKL1B and STK3/MST2. Interacts with MICAL1; leading to inhibit the protein kinase activity by antagonizing activation by MST1/STK4. Mg(2+) serves as cofactor. Post-translationally, ISGylated. In terms of processing, phosphorylated by STK3/MST2 and this is enhanced by MOBKL1B. As to expression, expressed at high levels in spleen, lung, thymus, brain and fat tissue.

The protein resides in the nucleus. It is found in the cytoplasm. The protein localises to the chromosome. The catalysed reaction is L-seryl-[protein] + ATP = O-phospho-L-seryl-[protein] + ADP + H(+). It catalyses the reaction L-threonyl-[protein] + ATP = O-phospho-L-threonyl-[protein] + ADP + H(+). With respect to regulation, activated by binding of S100B which releases autoinhibitory N-lobe interactions, enabling ATP to bind and the autophosphorylation of Ser-281. Thr-444 then undergoes calcium-dependent phosphorylation by STK24/MST3. Interactions between phosphorylated Thr-444 and the N-lobe promote additional structural changes that complete the activation of the kinase. Autoinhibition is also released by the binding of MOB1/MOBKL1A and MOB2/HCCA2 to the N-terminal of STK38. Its function is as follows. Serine/threonine-protein kinase that acts as a negative regulator of MAP3K1/2 signaling. Converts MAP3K2 from its phosphorylated form to its non-phosphorylated form and inhibits autophosphorylation of MAP3K2. Acts as an ufmylation 'reader' in a kinase-independent manner: specifically recognizes and binds mono-ufmylated histone H4 in response to DNA damage, promoting the recruitment of SUV39H1 to the double-strand breaks, resulting in ATM activation. This chain is Serine/threonine-protein kinase 38, found in Mus musculus (Mouse).